The following is a 197-amino-acid chain: Dehydrin DHN1 (197 aa).

Over residues 1–14 the composition is skewed to polar residues; it reads MSQYQNQYGAQTGM. Disordered regions lie at residues 1–86 and 133–197; these read MSQY…GTNP and GTEQ…CTGH. 2 tandem repeats follow at residues 16–21 and 26–31. The interval 16-31 is 2 X approximate repeats; sequence DEYGNPVNQVDQYGNP. A compositionally biased stretch (gly residues) spans 74–83; it reads THTGGVGGYG. One copy of the 2-1 repeat lies at 126 to 133; it reads KIKEKIPG. Positions 126–190 are 2 X approximate repeats; sequence KIKEKIPGTE…MDKIKEKLPG (65 aa). Residues 144 to 160 are compositionally biased toward gly residues; that stretch reads AGYGSTGYGASGGGIGN. The segment covering 165–188 has biased composition (basic and acidic residues); sequence YVREEHRVDHGEKKGIMDKIKEKL. One copy of the 2-2 repeat lies at 183 to 190; it reads KIKEKLPG.

Belongs to the plant dehydrin family. Shoots, roots, and cotyledon from dehydrating seedlings.

This chain is Dehydrin DHN1 (DHN1), found in Pisum sativum (Garden pea).